Consider the following 408-residue polypeptide: 8-amino-7-oxononanoate synthase (408 aa).

Arg20 is a binding site for substrate. 117–118 (GY) provides a ligand contact to pyridoxal 5'-phosphate. His142 is a binding site for substrate. Residues Ser188, His216, and Thr244 each contribute to the pyridoxal 5'-phosphate site. At Lys247 the chain carries N6-(pyridoxal phosphate)lysine. Thr367 contributes to the substrate binding site.

This sequence belongs to the class-II pyridoxal-phosphate-dependent aminotransferase family. BioF subfamily. In terms of assembly, homodimer. Requires pyridoxal 5'-phosphate as cofactor.

It carries out the reaction 6-carboxyhexanoyl-[ACP] + L-alanine + H(+) = (8S)-8-amino-7-oxononanoate + holo-[ACP] + CO2. It participates in cofactor biosynthesis; biotin biosynthesis. Functionally, catalyzes the decarboxylative condensation of pimeloyl-[acyl-carrier protein] and L-alanine to produce 8-amino-7-oxononanoate (AON), [acyl-carrier protein], and carbon dioxide. This chain is 8-amino-7-oxononanoate synthase, found in Cupriavidus pinatubonensis (strain JMP 134 / LMG 1197) (Cupriavidus necator (strain JMP 134)).